Consider the following 404-residue polypeptide: Probable tRNA sulfurtransferase (404 aa).

A THUMP domain is found at 60-165 (HEVAESLKEI…DEAAYISYEN (106 aa)). ATP is bound by residues 183–184 (ML), 208–209 (HF), Arg265, Gly287, and Gln296.

Belongs to the ThiI family.

The protein localises to the cytoplasm. The catalysed reaction is [ThiI sulfur-carrier protein]-S-sulfanyl-L-cysteine + a uridine in tRNA + 2 reduced [2Fe-2S]-[ferredoxin] + ATP + H(+) = [ThiI sulfur-carrier protein]-L-cysteine + a 4-thiouridine in tRNA + 2 oxidized [2Fe-2S]-[ferredoxin] + AMP + diphosphate. It catalyses the reaction [ThiS sulfur-carrier protein]-C-terminal Gly-Gly-AMP + S-sulfanyl-L-cysteinyl-[cysteine desulfurase] + AH2 = [ThiS sulfur-carrier protein]-C-terminal-Gly-aminoethanethioate + L-cysteinyl-[cysteine desulfurase] + A + AMP + 2 H(+). It functions in the pathway cofactor biosynthesis; thiamine diphosphate biosynthesis. Catalyzes the ATP-dependent transfer of a sulfur to tRNA to produce 4-thiouridine in position 8 of tRNAs, which functions as a near-UV photosensor. Also catalyzes the transfer of sulfur to the sulfur carrier protein ThiS, forming ThiS-thiocarboxylate. This is a step in the synthesis of thiazole, in the thiamine biosynthesis pathway. The sulfur is donated as persulfide by IscS. The polypeptide is Probable tRNA sulfurtransferase (Streptococcus agalactiae serotype Ia (strain ATCC 27591 / A909 / CDC SS700)).